The following is a 161-amino-acid chain: NADH-quinone oxidoreductase subunit I (161 aa).

4Fe-4S ferredoxin-type domains are found at residues 53-82 (RRYP…IEAE) and 92-121 (TRYD…EGPN). [4Fe-4S] cluster contacts are provided by C62, C65, C68, C72, C101, C104, C107, and C111.

The protein belongs to the complex I 23 kDa subunit family. As to quaternary structure, NDH-1 is composed of 14 different subunits. Subunits NuoA, H, J, K, L, M, N constitute the membrane sector of the complex. [4Fe-4S] cluster is required as a cofactor.

Its subcellular location is the cell inner membrane. It catalyses the reaction a quinone + NADH + 5 H(+)(in) = a quinol + NAD(+) + 4 H(+)(out). NDH-1 shuttles electrons from NADH, via FMN and iron-sulfur (Fe-S) centers, to quinones in the respiratory chain. The immediate electron acceptor for the enzyme in this species is believed to be ubiquinone. Couples the redox reaction to proton translocation (for every two electrons transferred, four hydrogen ions are translocated across the cytoplasmic membrane), and thus conserves the redox energy in a proton gradient. This is NADH-quinone oxidoreductase subunit I from Hyphomonas neptunium (strain ATCC 15444).